The chain runs to 218 residues: Small ribosomal subunit protein uS3 (218 aa).

Residues valine 38–lysine 107 form the KH type-2 domain.

This sequence belongs to the universal ribosomal protein uS3 family. Part of the 30S ribosomal subunit. Forms a tight complex with proteins S10 and S14.

Functionally, binds the lower part of the 30S subunit head. Binds mRNA in the 70S ribosome, positioning it for translation. The polypeptide is Small ribosomal subunit protein uS3 (Exiguobacterium sibiricum (strain DSM 17290 / CCUG 55495 / CIP 109462 / JCM 13490 / 255-15)).